Here is a 1208-residue protein sequence, read N- to C-terminus: MKSLAGHVVKYGKHRERKSFARISEVLELPNLIEIQTDSYQWFLDEGLREMFEDILPIDDFNGNLSLEFVDYELKEPKYTVAEARAHDANYSAPLHVTLRLTNRETGEIKAQEVFFGDFPLMTEQGTFIINGAERVIVSQLVRSPGVYFHGKVDKNGKEGFGSTVIPNRGAWLEMETDAKDISYVRIDRTRKIPLTVLVRALGFGSDDTIFEIFGDSETLRNTVEKDLHKNASDSRTEEGLKDVYERLRPGEPKTADSSRNLLNARFFDPKRYDLANVGRYKVNKKLDLKTRLLNLTLAETLVDPETGEIIVEKGTVLTHQVMETLAPFIDNGLNSVTYYPSEDGVVTDPMTVQVIKVFSPKDPEREVNVIGNGYPESAVKTVRPADIIASMSYFLNLMEGIGNVDDIDHLGNRRIRSVGELLQNQFRIGLARMERVVRERMSIQDTETLTPQQLINIRPVVASIKEFFGSSQLSQFMDQTNPLGELTHKRRLSALGPGGLTRDRAGYEVRDVHYSHYGRMCPIETPEGPNIGLINSLSSYAKVNKFGFIETPYRRVDRETGRVTDQIDYLTADIEDHYIVAQANSPLNEDGTFAQDVVMARAQSENLEVSIDKVDYMDVSPKQVVAVATACIPFLENDDSNRALMGANMQRQAVPLINPQAPWVGTGMEYKSAHDSGAALLCKHDGVVEFVDASEIRVRRDNGALDKYAVTKFRRSNSGTSYNQRPIVHLGEKVEKGDTLADGPSMEQGEMALGQNVLVGFMTWEGYNYEDAIIMSRRLVKDDVYTSIHIEEYESEARDTKLGPEEITREIPNVGEDALKDLDEMGIIRIGAEVQDGDLLVGKVTPKGVTELSAEERLLHAIFGEKAREVRDTSLRVPHGGGGIVHDVKIFTREAGDELSPGVNMLVRVYIVQKRKIHEGDKMAGRHGNKGVVSRIMPEEDMPFLPDGTPIDIMLNPLGVPSRMNIGQVLELHLGMAARQLGIHVATPVFDGASDEDVWETVREAGMASDAKTILYDGRTGEPFDGRVSVGVMYMIKLAHMVDDKLHARSIGPYSLVTQQPLGGKAQFGGQRFGEMEVWALEAYGAAYTLQEILTYKSDDVVGRVKTYEAIVKGEPIPKPGVPESFRVLVKELQSLGLDMRVLDIKDSEIELRDMDDEDDDLITVDALTKFAEQQTAKELEKKAAEQVEDERQDIIQNFETAEDNLD.

Belongs to the RNA polymerase beta chain family. The RNAP catalytic core consists of 2 alpha, 1 beta, 1 beta' and 1 omega subunit. When a sigma factor is associated with the core the holoenzyme is formed, which can initiate transcription.

It carries out the reaction RNA(n) + a ribonucleoside 5'-triphosphate = RNA(n+1) + diphosphate. Functionally, DNA-dependent RNA polymerase catalyzes the transcription of DNA into RNA using the four ribonucleoside triphosphates as substrates. The chain is DNA-directed RNA polymerase subunit beta from Enterococcus faecium (Streptococcus faecium).